Reading from the N-terminus, the 671-residue chain is Acetyl-coenzyme A synthetase 2 (671 aa).

Residues R207–R210 and T326 each bind CoA. ATP is bound by residues G402 to P404, D426 to T431, D517, and R532. S540 is a CoA binding site. ATP is bound at residue R543. Residue R603 coordinates CoA.

The protein belongs to the ATP-dependent AMP-binding enzyme family.

It carries out the reaction acetate + ATP + CoA = acetyl-CoA + AMP + diphosphate. In Candida albicans (strain SC5314 / ATCC MYA-2876) (Yeast), this protein is Acetyl-coenzyme A synthetase 2 (ACS2).